Consider the following 118-residue polypeptide: NADH-quinone oxidoreductase subunit A (118 aa).

3 helical membrane-spanning segments follow: residues 5–25, 61–81, and 90–110; these read FAAVGIALVVAIAINLIMMLM, FLYALVFTAFDVETVFLFPWA, and FAFIEMFVFIVILLVGFWYAW.

This sequence belongs to the complex I subunit 3 family. In terms of assembly, NDH-1 is composed of 14 different subunits. Subunits NuoA, H, J, K, L, M, N constitute the membrane sector of the complex.

Its subcellular location is the cell membrane. The enzyme catalyses a quinone + NADH + 5 H(+)(in) = a quinol + NAD(+) + 4 H(+)(out). NDH-1 shuttles electrons from NADH, via FMN and iron-sulfur (Fe-S) centers, to quinones in the respiratory chain. The immediate electron acceptor for the enzyme in this species is believed to be a menaquinone. Couples the redox reaction to proton translocation (for every two electrons transferred, four hydrogen ions are translocated across the cytoplasmic membrane), and thus conserves the redox energy in a proton gradient. The sequence is that of NADH-quinone oxidoreductase subunit A from Desulfitobacterium hafniense (strain Y51).